Here is a 365-residue protein sequence, read N- to C-terminus: Peridinin-chlorophyll a-binding protein, chloroplastic (365 aa).

The N-terminal 52 residues, 1-52 (MVRGARKAIAVGVAVAVACGLQKHLNFVPGPRHAAPVAAAAASMMMAPAAFA), are a transit peptide targeting the chloroplast. A run of 2 repeats spans residues 53–215 (DEIG…VPSG) and 216–365 (DKIG…ASQR).

As to quaternary structure, monomer.

Its subcellular location is the plastid. It is found in the chloroplast. Functionally, water-soluble antenna for capture of solar energy in the blue-green range. Peridinin is an asymmetric carotenoid. In Symbiodinium sp. (Dinoflagellate), this protein is Peridinin-chlorophyll a-binding protein, chloroplastic.